Consider the following 327-residue polypeptide: Putative cyclin-dependent kinase F-2 (327 aa).

A Protein kinase domain is found at 4–295 (YECLGKIGEG…AADALRCAWF (292 aa)). Residues 10 to 18 (IGEGAAGVV) and Lys33 contribute to the ATP site. Catalysis depends on Asp134, which acts as the Proton acceptor. At Thr167 the chain carries Phosphothreonine.

It belongs to the protein kinase superfamily. CMGC Ser/Thr protein kinase family. CDC2/CDKX subfamily.

The catalysed reaction is L-seryl-[protein] + ATP = O-phospho-L-seryl-[protein] + ADP + H(+). It carries out the reaction L-threonyl-[protein] + ATP = O-phospho-L-threonyl-[protein] + ADP + H(+). It catalyses the reaction [DNA-directed RNA polymerase] + ATP = phospho-[DNA-directed RNA polymerase] + ADP + H(+). The protein is Putative cyclin-dependent kinase F-2 (CDKF-2) of Oryza sativa subsp. japonica (Rice).